A 48-amino-acid polypeptide reads, in one-letter code: uncharacterized protein (48 aa).

This is an uncharacterized protein from Schizosaccharomyces pombe (strain 972 / ATCC 24843) (Fission yeast).